A 401-amino-acid chain; its full sequence is Dual-specificity RNA methyltransferase RlmN (401 aa).

E114 functions as the Proton acceptor in the catalytic mechanism. Positions D120–D365 constitute a Radical SAM core domain. C127 and C370 are disulfide-bonded. Residues C134, C138, and C141 each contribute to the [4Fe-4S] cluster site. Residues G187–E188, S219, S241–H243, and N327 contribute to the S-adenosyl-L-methionine site. C370 functions as the S-methylcysteine intermediate in the catalytic mechanism.

Belongs to the radical SAM superfamily. RlmN family. It depends on [4Fe-4S] cluster as a cofactor.

Its subcellular location is the cytoplasm. It catalyses the reaction adenosine(2503) in 23S rRNA + 2 reduced [2Fe-2S]-[ferredoxin] + 2 S-adenosyl-L-methionine = 2-methyladenosine(2503) in 23S rRNA + 5'-deoxyadenosine + L-methionine + 2 oxidized [2Fe-2S]-[ferredoxin] + S-adenosyl-L-homocysteine. The catalysed reaction is adenosine(37) in tRNA + 2 reduced [2Fe-2S]-[ferredoxin] + 2 S-adenosyl-L-methionine = 2-methyladenosine(37) in tRNA + 5'-deoxyadenosine + L-methionine + 2 oxidized [2Fe-2S]-[ferredoxin] + S-adenosyl-L-homocysteine. Its function is as follows. Specifically methylates position 2 of adenine 2503 in 23S rRNA and position 2 of adenine 37 in tRNAs. m2A2503 modification seems to play a crucial role in the proofreading step occurring at the peptidyl transferase center and thus would serve to optimize ribosomal fidelity. The protein is Dual-specificity RNA methyltransferase RlmN of Stenotrophomonas maltophilia (strain K279a).